The primary structure comprises 4644 residues: Cytoplasmic dynein 1 heavy chain 1 (4644 aa).

Ser-2 is subject to N-acetylserine. The interval 2–1865 (SEPGGGEDGS…SIQMANAKFN (1864 aa)) is stem. Coiled coils occupy residues 48–69 (AALE…FLSD), 179–200 (SVEK…NIEI), 453–476 (AHRK…QLRA), and 541–564 (TEAW…RITA). Position 68 is a phosphoserine (Ser-68). An interaction with DYNC1I2 region spans residues 446–701 (MVWRINPAHR…NTQEIFDDWA (256 aa)). The interval 649-800 (AKQIDRQLTA…EKVEERNTIS (152 aa)) is interaction with DYNC1LI2. N6-acetyllysine is present on Lys-1123. Residues 1169 to 1201 (TYVQSLKRKIKQFEKQVELYRNGQRLLEKQRFQ) adopt a coiled-coil conformation. A Phosphoserine modification is found at Ser-1228. 2 coiled-coil regions span residues 1229–1250 (AIQQ…AVES) and 1355–1371 (RKLR…LKNF). AAA regions lie at residues 1866–2097 (YGFE…VLVS), 2178–2450 (EELK…LTRL), 2554–2803 (EVET…WVRG), and 2897–3166 (VFYE…GGRT). ATP contacts are provided by residues 1904 to 1911 (GPAGTGKT) and 2222 to 2229 (GPSGSGKS). Residues 2388-2408 (GEDEAQRRRKGKEDEGEEAAS) form a disordered region. Residues 2593 to 2600 (GPPGSGKT) and 2935 to 2942 (GVSGAGKT) each bind ATP. Coiled coils occupy residues 3187 to 3273 (EKRS…ADKQ), 3394 to 3498 (AIAQ…KNQM), and 3735 to 3798 (EFQL…VSQQ). Residues 3187–3498 (EKRSELEEQQ…KTSETFKNQM (312 aa)) form a stalk region. Residue Lys-3478 is modified to N6-acetyllysine. AAA regions lie at residues 3551–3780 (LSNA…EVTR) and 4003–4219 (AHMF…TVDT). At Ser-4160 the chain carries Phosphoserine. Residue Lys-4281 is modified to N6-acetyllysine. Thr-4364 is subject to Phosphothreonine. Position 4366 is a phosphoserine (Ser-4366).

The protein belongs to the dynein heavy chain family. As to quaternary structure, homodimer. The cytoplasmic dynein 1 complex consists of two catalytic heavy chains (HCs) and a number of non-catalytic subunits presented by intermediate chains (ICs), light intermediate chains (LICs) and light chains (LCs); the composition seems to vary in respect to the IC, LIC and LC composition. The heavy chain homodimer serves as a scaffold for the probable homodimeric assembly of the respective non-catalytic subunits. The ICs and LICs bind directly to the HC dimer and dynein LCs assemble on the IC dimer. Interacts with DYNC1LI1; DYNC1LI1 and DYNC1LI2 bind mutually exclusive to DYNC1H1. Interacts with DYNC1LI2; DYNC1LI1 and DYNC1LI2 bind mutually exclusive to DYNC1H1. Interacts with DYNC1I2. Interacts with BICD2. Interacts with DNALI1.

The protein localises to the cytoplasm. It is found in the cytoskeleton. Its function is as follows. Cytoplasmic dynein 1 acts as a motor for the intracellular retrograde motility of vesicles and organelles along microtubules. Dynein has ATPase activity; the force-producing power stroke is thought to occur on release of ADP. Plays a role in mitotic spindle assembly and metaphase plate congression. The chain is Cytoplasmic dynein 1 heavy chain 1 (Dync1h1) from Mus musculus (Mouse).